A 692-amino-acid polypeptide reads, in one-letter code: 5-taurinomethyluridine-[tRNA] synthase subunit MTO1, mitochondrial (692 aa).

The transit peptide at 1–25 (MFYLRGCGRWVAASFTKQQFPLVRL) directs the protein to the mitochondrion. FAD contacts are provided by residues 43-48 (GGGHAG), V155, S218, and Q407. At K508 the chain carries N6-methyllysine. Residues 669–692 (AAMNESPKTDQCLRNADRLQERQL) form a disordered region. Positions 683–692 (NADRLQERQL) are enriched in basic and acidic residues.

The protein belongs to the MnmG family. Homodimer; forms a dimer in the presence of potassium. Interacts with GTPBP3; forms the GTPBP3-MTO1 complex composed of homodimers of GTPBP3 and MTO1. The cofactor is FAD.

The protein resides in the mitochondrion. The catalysed reaction is 5,10-methylenetetrahydrofolate + uridine(34) in tRNA + taurine + GTP + A + H2O = 5-taurinomethyluridine(34) in tRNA + 7,8-dihydrofolate + GDP + AH2 + phosphate + H(+). Its function is as follows. Component of the GTPBP3-MTO1 complex that catalyzes the 5-taurinomethyluridine (taum(5)U) modification at the 34th wobble position (U34) of mitochondrial tRNAs (mt-tRNAs), which plays a role in mt-tRNA decoding and mitochondrial translation. Taum(5)U formation on mammalian mt-tRNA requires the presence of both GTPBP3-mediated GTPase activity and MTO1 catalytic activity. This Macaca fascicularis (Crab-eating macaque) protein is 5-taurinomethyluridine-[tRNA] synthase subunit MTO1, mitochondrial (MTO1).